Reading from the N-terminus, the 188-residue chain is MKIGVSGIQGDFREHKVMLEKLGVDVKVVRKPEELDEVDGLVIPGGESTTMIRIMKMVNLYEKLKQKIKEGFPVFGTCAGMILLSKEVVNFPQDSLGVIDIKVERNAYGRQVDSFEEQIEVKGFEKTFNAIFIRAPKVVDYGENVEVLATYMDSPVLLRQNNVLVASFHPELTEDTRIHEYFLNMVKK.

An L-glutamine-binding site is contributed by 46–48 (GES). The Nucleophile role is filled by Cys78. L-glutamine contacts are provided by residues Arg105 and 133-134 (IR). Active-site charge relay system residues include His169 and Glu171.

This sequence belongs to the glutaminase PdxT/SNO family. In terms of assembly, in the presence of PdxS, forms a dodecamer of heterodimers. Only shows activity in the heterodimer.

It catalyses the reaction aldehydo-D-ribose 5-phosphate + D-glyceraldehyde 3-phosphate + L-glutamine = pyridoxal 5'-phosphate + L-glutamate + phosphate + 3 H2O + H(+). The enzyme catalyses L-glutamine + H2O = L-glutamate + NH4(+). It participates in cofactor biosynthesis; pyridoxal 5'-phosphate biosynthesis. Its function is as follows. Catalyzes the hydrolysis of glutamine to glutamate and ammonia as part of the biosynthesis of pyridoxal 5'-phosphate. The resulting ammonia molecule is channeled to the active site of PdxS. The sequence is that of Pyridoxal 5'-phosphate synthase subunit PdxT from Thermosipho africanus (strain TCF52B).